A 436-amino-acid chain; its full sequence is Ribulose bisphosphate carboxylase large chain (436 aa).

The substrate site is built by N104 and T154. The active-site Proton acceptor is the K156. K158 is a binding site for substrate. Positions 182, 184, and 185 each coordinate Mg(2+). The residue at position 182 (K182) is an N6-carboxylysine. The Proton acceptor role is filled by H275. R276, H308, and S360 together coordinate substrate.

The protein belongs to the RuBisCO large chain family. Type I subfamily. In terms of assembly, heterohexadecamer of 8 large chains and 8 small chains; disulfide-linked. The disulfide link is formed within the large subunit homodimers. Mg(2+) is required as a cofactor. In terms of processing, the disulfide bond which can form in the large chain dimeric partners within the hexadecamer appears to be associated with oxidative stress and protein turnover.

Its subcellular location is the plastid. The protein localises to the chloroplast. The enzyme catalyses 2 (2R)-3-phosphoglycerate + 2 H(+) = D-ribulose 1,5-bisphosphate + CO2 + H2O. The catalysed reaction is D-ribulose 1,5-bisphosphate + O2 = 2-phosphoglycolate + (2R)-3-phosphoglycerate + 2 H(+). RuBisCO catalyzes two reactions: the carboxylation of D-ribulose 1,5-bisphosphate, the primary event in carbon dioxide fixation, as well as the oxidative fragmentation of the pentose substrate in the photorespiration process. Both reactions occur simultaneously and in competition at the same active site. The polypeptide is Ribulose bisphosphate carboxylase large chain (Euglena geniculata).